Consider the following 429-residue polypeptide: Xaa-Pro dipeptidase (429 aa).

5 residues coordinate Mn(2+): Asp-241, Asp-252, His-334, Glu-372, and Glu-411.

This sequence belongs to the peptidase M24B family. Bacterial-type prolidase subfamily. Mn(2+) serves as cofactor.

The catalysed reaction is Xaa-L-Pro dipeptide + H2O = an L-alpha-amino acid + L-proline. In terms of biological role, splits dipeptides with a prolyl residue in the C-terminal position. This chain is Xaa-Pro dipeptidase, found in Marinobacter nauticus (strain ATCC 700491 / DSM 11845 / VT8) (Marinobacter aquaeolei).